The chain runs to 3119 residues: Huntingtin (3119 aa).

Positions 1–65 (MATLEKLMKA…LPGPAEEPLH (65 aa)) are disordered. Lys9 carries the N6-acetyllysine modification. Over residues 24–60 (QPPPQAPPPPPPPPPQPPQPPPQGQPPPPPPPLPGPA) the composition is skewed to pro residues. Residues Lys155 and Lys213 each carry the N6-acetyllysine modification. HEAT repeat units follow at residues 183 to 220 (PYLV…SFGN) and 225 to 262 (NEIK…HSRR). Residue Lys322 is modified to N6-acetyllysine. Residues Ser396, Ser398, and Ser411 each carry the phosphoserine modification. The residue at position 421 (Lys421) is an N6-acetyllysine. The segment at 470-481 (GHDIITEQPRSQ) is interaction with ZDHHC17. Positions 495 to 558 (DLTSAATDGD…DSAVTPSDSS (64 aa)) are disordered. Residues 529–558 (DGTQASSPISDSSQTTTEGPDSAVTPSDSS) are compositionally biased toward polar residues. Gly530 is lipidated: N-myristoyl glycine. 2 positions are modified to phosphoserine: Ser620 and Ser623. 2 HEAT repeats span residues 782-819 (FSLV…SLCS) and 882-920 (KLQE…KLFY). A disordered region spans residues 1146–1204 (KAALPSLTNPPSLSPIRRKGKEKEPGEQASTPMSPKKVGEASAASRQSDTSGPVTASKS). Residues 1149 to 1160 (LPSLTNPPSLSP) are compositionally biased toward low complexity. Phosphoserine; by CDK5 occurs at positions 1159 and 1179. The segment covering 1189–1204 (ASRQSDTSGPVTASKS) has biased composition (polar residues). One copy of the HEAT 5 repeat lies at 1404–1441 (LFEPLVIKALKQYTTTTSVQLQKQVLDLLAQLVQLRVN). Ser1853 bears the Phosphoserine mark. A Nuclear export signal motif is present at residues 2372–2381 (IVISLARLPL). A disordered region spans residues 2610–2637 (EEEWDEEEEEESDVPAPTSPPVSPVNSR). Positions 2611-2622 (EEWDEEEEEESD) are enriched in acidic residues.

This sequence belongs to the huntingtin family. In terms of assembly, interacts with PFN1. Interacts through its N-terminus with PRPF40A. Interacts with PQBP1. Interacts with SETD2. Interacts with SH3GLB1. Interacts with SYVN. Interacts with TPR; the interaction is inhibited by forms of Huntingtin with expanded polyglutamine stretch. Interacts with ZDHHC13 (via ANK repeats). Interacts with ZDHHC17 (via ANK repeats). Interacts with F8A1/F8A2/F8A3. Found in a complex with F8A1/F8A2/F8A3, HTT and RAB5A; mediates the recruitment of HTT by RAB5A. Phosphorylation at Ser-1159 and Ser-1179 by CDK5 in response to DNA damage in nuclei of neurons protects neurons against polyglutamine expansion as well as DNA damage mediated toxicity. In terms of processing, cleaved by caspases downstream of the polyglutamine stretch. Post-translationally, myristoylated at Gly-530, following proteolytic cleavage at Asp-529. As to expression, the highest level is seen throughout the brain, but it is also found in the stomach, heart, testis, adipose tissue, muscle, spleen, liver, and kidney.

It is found in the cytoplasm. The protein resides in the nucleus. The protein localises to the cytoplasmic vesicle. It localises to the autophagosome. May play a role in microtubule-mediated transport or vesicle function. Its function is as follows. Promotes the formation of autophagic vesicles. This chain is Huntingtin (Htt), found in Mus musculus (Mouse).